The sequence spans 475 residues: Endoglucanase A (475 aa).

The N-terminal stretch at 1–26 (MKKTTAFLLCFLMIFTALLPMQNANA) is a signal peptide. H147 is an active-site residue. E195 (proton donor) is an active-site residue. E332 functions as the Nucleophile in the catalytic mechanism. The Dockerin domain maps to 409–474 (PVIVYGDYNN…LLGMVSKLPS (66 aa)).

This sequence belongs to the glycosyl hydrolase 5 (cellulase A) family.

It catalyses the reaction Endohydrolysis of (1-&gt;4)-beta-D-glucosidic linkages in cellulose, lichenin and cereal beta-D-glucans.. Its function is as follows. The biological conversion of cellulose to glucose generally requires three types of hydrolytic enzymes: (1) Endoglucanases which cut internal beta-1,4-glucosidic bonds; (2) Exocellobiohydrolases that cut the disaccharide cellobiose from the non-reducing end of the cellulose polymer chain; (3) Beta-1,4-glucosidases which hydrolyze the cellobiose and other short cello-oligosaccharides to glucose. This is Endoglucanase A (celCCA) from Ruminiclostridium cellulolyticum (strain ATCC 35319 / DSM 5812 / JCM 6584 / H10) (Clostridium cellulolyticum).